The primary structure comprises 401 residues: Membrane protein UL43 homolog (401 aa).

The next 10 helical transmembrane spans lie at 43–63 (FVGI…IDLL), 67–87 (STCL…RVPI), 93–113 (IVTV…SVWV), 124–144 (LIVV…ISLF), 159–179 (ASLL…LVEL), 182–202 (VPIG…FGLA), 259–279 (PGVI…WIVL), 294–314 (YVVF…QLVI), 332–352 (AVCM…SLAF), and 379–399 (ISRW…ATII).

The protein belongs to the alphaherpesvirinae HHV-1 UL43 family.

The protein localises to the membrane. The polypeptide is Membrane protein UL43 homolog (Equine herpesvirus 1 (strain Ab4p) (EHV-1)).